Reading from the N-terminus, the 87-residue chain is Precursor of CEP8 (87 aa).

The first 29 residues, 1–29 (MAKALFFNFCISLLIIAILVSHEIIPTEA), serve as a signal peptide directing secretion. The propeptide occupies 30-72 (RHLRTHRKSIKNSTLTVHEGAGGLRTGGGSVKTDISKEEHGVD). Asn-41 is a glycosylation site (N-linked (GlcNAc...) asparagine). The tract at residues 41 to 87 (NSTLTVHEGAGGLRTGGGSVKTDISKEEHGVDEFRPTTPGNSPGIGH) is disordered. Over residues 49-59 (GAGGLRTGGGS) the composition is skewed to gly residues. Residues 63 to 75 (DISKEEHGVDEFR) are compositionally biased toward basic and acidic residues. A hydroxyproline mark is found at Pro-76, Pro-79, and Pro-83.

Belongs to the C-terminally encoded plant signaling peptide (CEP) family. As to quaternary structure, interacts with CEP receptors (e.g. CEPR1 and CEPR2). The mature small signaling peptide is generated by proteolytic processing of the longer precursor. As to expression, expressed in lateral root primordia and in lateral roots excluding the meristem region. Also present in the aerial tissues, such as leaf petioles and the shoot apex region.

The protein resides in the secreted. Its subcellular location is the extracellular space. It localises to the apoplast. Extracellular signaling peptide that may regulate primary root growth rate and systemic nitrogen (N)-demand signaling. Mediates up-regulation of genes involved in N uptake and assimilation pathways. The chain is Precursor of CEP8 from Arabidopsis thaliana (Mouse-ear cress).